The chain runs to 413 residues: Queuine tRNA-ribosyltransferase accessory subunit 2 (413 aa).

Residues 298 to 321 (LEKSETSGAERNGDVGAESEEPDA) are disordered. Zn(2+) is bound by residues Cys-349, Cys-351, Cys-354, and His-380.

This sequence belongs to the queuine tRNA-ribosyltransferase family. QTRT2 subfamily. In terms of assembly, heterodimer of a catalytic subunit qtrt1 and an accessory subunit qtrt2. The cofactor is Zn(2+).

The protein resides in the cytoplasm. It localises to the mitochondrion outer membrane. Functionally, non-catalytic subunit of the queuine tRNA-ribosyltransferase (TGT) that catalyzes the base-exchange of a guanine (G) residue with queuine (Q) at position 34 (anticodon wobble position) in tRNAs with GU(N) anticodons (tRNA-Asp, -Asn, -His and -Tyr), resulting in the hypermodified nucleoside queuosine (7-(((4,5-cis-dihydroxy-2-cyclopenten-1-yl)amino)methyl)-7-deazaguanosine). In Xenopus tropicalis (Western clawed frog), this protein is Queuine tRNA-ribosyltransferase accessory subunit 2.